The following is a 553-amino-acid chain: Dihydroxy-acid dehydratase (553 aa).

Mg(2+) is bound at residue Asp-78. Residue Cys-119 coordinates [2Fe-2S] cluster. Mg(2+) is bound by residues Asp-120 and Lys-121. At Lys-121 the chain carries N6-carboxylysine. [2Fe-2S] cluster is bound at residue Cys-193. Residue Glu-441 coordinates Mg(2+). Ser-467 acts as the Proton acceptor in catalysis.

This sequence belongs to the IlvD/Edd family. In terms of assembly, homodimer. The cofactor is [2Fe-2S] cluster. Mg(2+) is required as a cofactor.

The catalysed reaction is (2R)-2,3-dihydroxy-3-methylbutanoate = 3-methyl-2-oxobutanoate + H2O. It catalyses the reaction (2R,3R)-2,3-dihydroxy-3-methylpentanoate = (S)-3-methyl-2-oxopentanoate + H2O. It participates in amino-acid biosynthesis; L-isoleucine biosynthesis; L-isoleucine from 2-oxobutanoate: step 3/4. The protein operates within amino-acid biosynthesis; L-valine biosynthesis; L-valine from pyruvate: step 3/4. Functions in the biosynthesis of branched-chain amino acids. Catalyzes the dehydration of (2R,3R)-2,3-dihydroxy-3-methylpentanoate (2,3-dihydroxy-3-methylvalerate) into 2-oxo-3-methylpentanoate (2-oxo-3-methylvalerate) and of (2R)-2,3-dihydroxy-3-methylbutanoate (2,3-dihydroxyisovalerate) into 2-oxo-3-methylbutanoate (2-oxoisovalerate), the penultimate precursor to L-isoleucine and L-valine, respectively. The chain is Dihydroxy-acid dehydratase from Pelobacter propionicus (strain DSM 2379 / NBRC 103807 / OttBd1).